An 80-amino-acid polypeptide reads, in one-letter code: OMEGA-myrmeciitoxin(02)-Mg1a (80 aa).

Residues 1–30 form the signal peptide; the sequence is MKNNYISTCIVYLMAALLLISVISIKECTA. The EGF-like domain occupies 35 to 75; it reads YGDPCSDDLKDYCIHGDCFFLKELNQPACRCYTGYYGSRCE. Cystine bridges form between Cys-39/Cys-52, Cys-47/Cys-63, and Cys-65/Cys-74.

The protein belongs to the EGF domain peptide family. As to expression, expressed by the venom gland.

It localises to the secreted. Functionally, ant peptide with probable defensive activity which acts as a potent agonist of the mammalian epidermal growth factor receptor (EGFR) (EC(50)=6.3 nM). Mimics, both structurally and functionally, vertebrate epidermal growth factor (EGF) peptide hormones. In vivo, intraplantar injection in mice causes long-lasting (several days) hypersensitivity of the injected paw to both mechanical and thermal stimuli. Its long-lasting effect is unusual for venom toxins whose effects are usually immediate. One possible explanation is that it would reduce the duration of a nest attack, discourage future attacks, or enhance the actions of subsequent exposure to other pain-inducing venom peptides. The chain is OMEGA-myrmeciitoxin(02)-Mg1a from Myrmecia gulosa (Red bulldog ant).